The sequence spans 144 residues: Large ribosomal subunit protein uL15 (144 aa).

The disordered stretch occupies residues Met1–Gly52. Residues Arg21–Gly31 show a composition bias toward gly residues.

This sequence belongs to the universal ribosomal protein uL15 family. As to quaternary structure, part of the 50S ribosomal subunit.

Binds to the 23S rRNA. This is Large ribosomal subunit protein uL15 from Buchnera aphidicola subsp. Acyrthosiphon kondoi (Acyrthosiphon kondoi symbiotic bacterium).